The sequence spans 285 residues: Catechol-2,3-dioxygenase (285 aa).

VOC domains lie at 9–126 (HIGY…MYAD) and 169–285 (IIGH…TFVI). Fe cation contacts are provided by His-213 and Glu-264.

The protein belongs to the extradiol ring-cleavage dioxygenase family. It depends on Fe(2+) as a cofactor.

It carries out the reaction catechol + O2 = (2Z,4E)-2-hydroxy-6-oxohexa-2,4-dienoate + H(+). Its function is as follows. Involved in the meta cleavage of catechol to 2-hydroxymuconic semialdehyde. Essential for growth and viability in the presence of catechol and probably involved in the detoxification of catechol. This chain is Catechol-2,3-dioxygenase (catE), found in Bacillus subtilis (strain 168).